The chain runs to 266 residues: 5'-nucleotidase SurE (266 aa).

Residues Asp-8, Asp-9, Ser-40, and Asn-98 each coordinate a divalent metal cation.

This sequence belongs to the SurE nucleotidase family. A divalent metal cation serves as cofactor.

The protein resides in the cytoplasm. It carries out the reaction a ribonucleoside 5'-phosphate + H2O = a ribonucleoside + phosphate. Nucleotidase that shows phosphatase activity on nucleoside 5'-monophosphates. In Parasynechococcus marenigrum (strain WH8102), this protein is 5'-nucleotidase SurE.